Reading from the N-terminus, the 260-residue chain is Phosphatidylglycerol--prolipoprotein diacylglyceryl transferase (260 aa).

Helical transmembrane passes span 17 to 37 (VVKW…SWIF), 52 to 72 (LTAA…LHVI), 85 to 105 (ILSG…IGLW), and 113 to 133 (FNLG…QAIG). Arg134 serves as a coordination point for a 1,2-diacyl-sn-glycero-3-phospho-(1'-sn-glycerol). A run of 3 helical transmembrane segments spans residues 170–190 (VPTQ…SLFI), 198–218 (GQLF…IGFV), and 227–247 (GLEQ…PFFI).

This sequence belongs to the Lgt family.

Its subcellular location is the cell membrane. It catalyses the reaction L-cysteinyl-[prolipoprotein] + a 1,2-diacyl-sn-glycero-3-phospho-(1'-sn-glycerol) = an S-1,2-diacyl-sn-glyceryl-L-cysteinyl-[prolipoprotein] + sn-glycerol 1-phosphate + H(+). It participates in protein modification; lipoprotein biosynthesis (diacylglyceryl transfer). Functionally, catalyzes the transfer of the diacylglyceryl group from phosphatidylglycerol to the sulfhydryl group of the N-terminal cysteine of a prolipoprotein, the first step in the formation of mature lipoproteins. This chain is Phosphatidylglycerol--prolipoprotein diacylglyceryl transferase, found in Dehalococcoides mccartyi (strain ATCC BAA-2266 / KCTC 15142 / 195) (Dehalococcoides ethenogenes (strain 195)).